A 473-amino-acid polypeptide reads, in one-letter code: MASEVSVASSGSEHSGAQKCPFQDPGLSSMDQDSRLRDILSRFNREKIPERAVHARGAGAYGEFEVTHDVSDICDIDMLLGVGKKTPCVVRFSTTTLERGSAESVRDVKGMAIKHFTQDGNWDWVCLNIPMFFIRDPSKFPDMVHAQRPDPTTNVANPSRWWEFVCNNHETLHMVMFQFSDFGTMFDYRSMSGYAAHAYKWVMPDGSWKYVHWFLASDQGPNFETGHQAKQIGADDAESATRDLYQSLERGEYPSWTVKVQVVDPEDAPKLPFNILDVTKHWNLGNYPPDIDVIPGRTLGKLTLKKGPQDYFEEIEQLAFSPSRLVHGVEASEDPMLQARLFAYPDAQKHRLGPNNLDLPANRTKKLADGSRPEKAEMAPQKVPSQEHADWVSQVKSSSWSEPNETDYKFPREFWKALPRLRGEAFQNSLVVNMAKSVSQVPADMRQKVYSTLALIADDLADRVRTMTEEIVE.

Over residues 1 to 15 (MASEVSVASSGSEHS) the composition is skewed to low complexity. The tract at residues 1-31 (MASEVSVASSGSEHSGAQKCPFQDPGLSSMD) is disordered. The active site involves histidine 54. Tyrosine 344 is a binding site for heme. The segment at 352-389 (LGPNNLDLPANRTKKLADGSRPEKAEMAPQKVPSQEHA) is disordered. Residues 366 to 377 (KLADGSRPEKAE) show a composition bias toward basic and acidic residues.

Belongs to the catalase family. Heme serves as cofactor.

It participates in alkaloid biosynthesis; ergot alkaloid biosynthesis. Functionally, catalase; part of the gene cluster that mediates the biosynthesis of fungal ergot alkaloid. DmaW catalyzes the first step of ergot alkaloid biosynthesis by condensing dimethylallyl diphosphate (DMAP) and tryptophan to form 4-dimethylallyl-L-tryptophan. The second step is catalyzed by the methyltransferase easF that methylates 4-dimethylallyl-L-tryptophan in the presence of S-adenosyl-L-methionine, resulting in the formation of 4-dimethylallyl-L-abrine. The catalase easC and the FAD-dependent oxidoreductase easE then transform 4-dimethylallyl-L-abrine to chanoclavine-I which is further oxidized by easD in the presence of NAD(+), resulting in the formation of chanoclavine-I aldehyde. Agroclavine dehydrogenase easG then mediates the conversion of chanoclavine-I aldehyde to agroclavine via a non-enzymatic adduct reaction: the substrate is an iminium intermediate that is formed spontaneously from chanoclavine-I aldehyde in the presence of glutathione. The presence of easA is not required to complete this reaction. Further conversion of agroclavine to paspalic acid is a two-step process involving oxidation of agroclavine to elymoclavine and of elymoclavine to paspalic acid, the second step being performed by the elymoclavine oxidase cloA. Paspalic acid is then further converted to D-lysergic acid. Ergopeptines are assembled from D-lysergic acid and three different amino acids by the D-lysergyl-peptide-synthetases composed each of a monomudular and a trimodular nonribosomal peptide synthetase subunit. LpsB and lpsC encode the monomodular subunits responsible for D-lysergic acid activation and incorporation into the ergopeptine backbone. LpsA1 and A2 subunits encode the trimodular nonribosomal peptide synthetase assembling the tripeptide portion of ergopeptines. LpsA1 is responsible for formation of the major ergopeptine, ergotamine, and lpsA2 for alpha-ergocryptine, the minor ergopeptine of the total alkaloid mixture elaborated by C.purpurea. D-lysergyl-tripeptides are assembled by the nonribosomal peptide synthetases and released as N-(D-lysergyl-aminoacyl)-lactams. Cyclolization of the D-lysergyl-tripeptides is performed by the Fe(2+)/2-ketoglutarate-dependent dioxygenase easH which introduces a hydroxyl group into N-(D-lysergyl-aminoacyl)-lactam at alpha-C of the aminoacyl residue followed by spontaneous condensation with the terminal lactam carbonyl group. This Claviceps purpurea (strain 20.1) (Ergot fungus) protein is Catalase easC.